A 305-amino-acid chain; its full sequence is uncharacterized protein (305 aa).

The first 29 residues, 1–29, serve as a signal peptide directing secretion; it reads MKKWFSSISKKKVSFSTLLLLGSGIVLSS. Cysteine 30 is lipidated: N-palmitoyl cysteine. Cysteine 30 carries the S-diacylglycerol cysteine lipid modification. The segment at 234–265 is disordered; it reads FYNPDNSNGSNAPGSNQPNQDSGNNGSTTPAA. Polar residues predominate over residues 237–258; sequence PDNSNGSNAPGSNQPNQDSGNN.

The protein localises to the cell membrane. This is an uncharacterized protein from Mycoplasma pneumoniae (strain ATCC 29342 / M129 / Subtype 1) (Mycoplasmoides pneumoniae).